A 737-amino-acid chain; its full sequence is Delta and Notch-like epidermal growth factor-related receptor (737 aa).

The N-terminal stretch at 1 to 25 (MPPRRAQAPGAPLLPVLALLPLLLG) is a signal peptide. The Extracellular portion of the chain corresponds to 26 to 640 (AGPQSGCLAS…LTNMPRHSLY (615 aa)). EGF-like domains are found at residues 44 to 92 (APGP…TYCQ) and 94 to 133 (VADP…LNCE). An interaction with NOTCH1 region spans residues 44–133 (APGPCASQPC…NDGYEGLNCE (90 aa)). 6 cysteine pairs are disulfide-bonded: cysteine 48-cysteine 59, cysteine 53-cysteine 80, cysteine 82-cysteine 91, cysteine 98-cysteine 108, cysteine 103-cysteine 121, and cysteine 123-cysteine 132. Asparagine 204 is a glycosylation site (N-linked (GlcNAc...) asparagine). 5 EGF-like domains span residues 309-348 (PGDS…TFCE), 349-390 (EFDA…ELCQ), 392-428 (KIDY…SACE), 430-466 (KVDP…PTCA), and 468-503 (LVDF…LYCE). 23 cysteine pairs are disulfide-bonded: cysteine 319-cysteine 336, cysteine 338-cysteine 347, cysteine 353-cysteine 364, cysteine 358-cysteine 378, cysteine 380-cysteine 389, cysteine 396-cysteine 407, cysteine 401-cysteine 416, cysteine 418-cysteine 427, cysteine 434-cysteine 445, cysteine 439-cysteine 454, cysteine 456-cysteine 465, cysteine 472-cysteine 482, cysteine 477-cysteine 491, cysteine 493-cysteine 502, cysteine 509-cysteine 520, cysteine 514-cysteine 529, cysteine 531-cysteine 540, cysteine 547-cysteine 558, cysteine 552-cysteine 567, cysteine 569-cysteine 578, cysteine 585-cysteine 596, cysteine 590-cysteine 605, and cysteine 607-cysteine 616. The 37-residue stretch at 505–541 (EYNECLSAPCLNAATCRDLINGYECVCLAEYKGTHCE) folds into the EGF-like 8; calcium-binding domain. The EGF-like 9 domain occupies 543–579 (YKDPCANISCLNGGTCDSEGLNGTCICAPGFTGEECD). A glycan (N-linked (GlcNAc...) asparagine) is linked at asparagine 564. Positions 581-617 (DINECDSNPCHHAGTCLDQPNGYTCHCPHGWVGANCE) constitute an EGF-like 10; calcium-binding domain. Residues 641-661 (IIIGALCVAFILMLIILIVGI) form a helical membrane-spanning segment. At 662 to 737 (CRISRIEYQG…LVTLIKTKDL (76 aa)) the chain is on the cytoplasmic side. Residues 677–680 (YEEF) form an interaction with AP1G1 and somatodendritic targeting region. Serine 685 carries the phosphoserine modification. At tyrosine 711 the chain carries Phosphotyrosine. Position 714 is a phosphothreonine (threonine 714). Tyrosine 721 is subject to Phosphotyrosine. Serine 722 is subject to Phosphoserine.

In terms of assembly, interacts with AP1G1. Interacts with NOTCH1. N-glycosylated. Specifically expressed in brain neurons (at protein level).

The protein localises to the cell membrane. In terms of biological role, mediates neuron-glia interaction during astrocytogenesis. May promote differentiation of Bergmann glia during cerebellar development by activating DELTEX-dependent NOTCH1 signaling. This is Delta and Notch-like epidermal growth factor-related receptor (Dner) from Mus musculus (Mouse).